The primary structure comprises 474 residues: Glutathione synthetase (474 aa).

Ala2 is modified (N-acetylalanine). Arg125 provides a ligand contact to substrate. Glu144 lines the ATP pocket. Residues Glu144 and Asn146 each coordinate Mg(2+). Residues 148–151, 214–216, Gln220, and 267–270 each bind substrate; these read VSAS, ERN, and RDGY. ATP-binding positions include Lys305, 364–373, Tyr375, and 398–401; these read KPQREGGGNN and MEKI. Glu368 is a Mg(2+) binding site. Ser415 is subject to Phosphoserine. Position 425 (Glu425) interacts with ATP. Arg450 is a substrate binding site. Residues Lys452 and Asp458 each coordinate ATP. 461 to 462 provides a ligand contact to substrate; sequence VA.

Belongs to the eukaryotic GSH synthase family. Homodimer. Requires Mg(2+) as cofactor.

It catalyses the reaction gamma-L-glutamyl-L-cysteine + glycine + ATP = glutathione + ADP + phosphate + H(+). The catalysed reaction is gamma-L-glutamyl-(2S)-2-aminobutanoate + glycine + ATP = ophthalmate + ADP + phosphate + H(+). It participates in sulfur metabolism; glutathione biosynthesis; glutathione from L-cysteine and L-glutamate: step 2/2. Catalyzes the production of glutathione from gamma-glutamylcysteine and glycine in an ATP-dependent manner. Glutathione (gamma-glutamylcysteinylglycine, GSH) is the most abundant intracellular thiol in living aerobic cells and is required for numerous processes including the protection of cells against oxidative damage, amino acid transport, the detoxification of foreign compounds, the maintenance of protein sulfhydryl groups in a reduced state and acts as a cofactor for a number of enzymes. Participates in ophthalmate biosynthesis in hepatocytes. In Bos taurus (Bovine), this protein is Glutathione synthetase.